The sequence spans 366 residues: Spermidine/putrescine import ATP-binding protein PotA (366 aa).

Residues 8–239 (IRFENVTKQF…PINKFVADFI (232 aa)) enclose the ABC transporter domain. 41–48 (GPSGCGKT) serves as a coordination point for ATP.

The protein belongs to the ABC transporter superfamily. Spermidine/putrescine importer (TC 3.A.1.11.1) family. The complex is composed of two ATP-binding proteins (PotA), two transmembrane proteins (PotB and PotC) and a solute-binding protein (PotD).

The protein resides in the cell membrane. The enzyme catalyses ATP + H2O + polyamine-[polyamine-binding protein]Side 1 = ADP + phosphate + polyamineSide 2 + [polyamine-binding protein]Side 1.. Part of the ABC transporter complex PotABCD involved in spermidine/putrescine import. Responsible for energy coupling to the transport system. This chain is Spermidine/putrescine import ATP-binding protein PotA, found in Listeria innocua serovar 6a (strain ATCC BAA-680 / CLIP 11262).